The primary structure comprises 102 residues: Aspartyl/glutamyl-tRNA(Asn/Gln) amidotransferase subunit C (102 aa).

This sequence belongs to the GatC family. As to quaternary structure, heterotrimer of A, B and C subunits.

The catalysed reaction is L-glutamyl-tRNA(Gln) + L-glutamine + ATP + H2O = L-glutaminyl-tRNA(Gln) + L-glutamate + ADP + phosphate + H(+). It carries out the reaction L-aspartyl-tRNA(Asn) + L-glutamine + ATP + H2O = L-asparaginyl-tRNA(Asn) + L-glutamate + ADP + phosphate + 2 H(+). Its function is as follows. Allows the formation of correctly charged Asn-tRNA(Asn) or Gln-tRNA(Gln) through the transamidation of misacylated Asp-tRNA(Asn) or Glu-tRNA(Gln) in organisms which lack either or both of asparaginyl-tRNA or glutaminyl-tRNA synthetases. The reaction takes place in the presence of glutamine and ATP through an activated phospho-Asp-tRNA(Asn) or phospho-Glu-tRNA(Gln). This chain is Aspartyl/glutamyl-tRNA(Asn/Gln) amidotransferase subunit C, found in Leuconostoc citreum (strain KM20).